Here is a 214-residue protein sequence, read N- to C-terminus: Uracil phosphoribosyltransferase (214 aa).

5-phospho-alpha-D-ribose 1-diphosphate contacts are provided by residues Arg81, Arg106, and 133 to 141 (DPMLATGNS). Uracil contacts are provided by residues Ile196 and 201–203 (GDA). 5-phospho-alpha-D-ribose 1-diphosphate is bound at residue Asp202.

This sequence belongs to the UPRTase family. Requires Mg(2+) as cofactor.

It catalyses the reaction UMP + diphosphate = 5-phospho-alpha-D-ribose 1-diphosphate + uracil. The protein operates within pyrimidine metabolism; UMP biosynthesis via salvage pathway; UMP from uracil: step 1/1. Its activity is regulated as follows. Allosterically activated by GTP. Functionally, catalyzes the conversion of uracil and 5-phospho-alpha-D-ribose 1-diphosphate (PRPP) to UMP and diphosphate. The protein is Uracil phosphoribosyltransferase of Legionella pneumophila subsp. pneumophila (strain Philadelphia 1 / ATCC 33152 / DSM 7513).